The chain runs to 484 residues: Ornithine decarboxylase (484 aa).

Lys-114 bears the N6-(pyridoxal phosphate)lysine mark. Pyridoxal 5'-phosphate is bound by residues Ser-245, Gly-282, and 315 to 318 (EPGR). Position 381–382 (381–382 (FD)) interacts with substrate. The Proton donor; shared with dimeric partner role is filled by Cys-422. Substrate is bound at residue Asp-423. Position 452 (Tyr-452) interacts with pyridoxal 5'-phosphate.

This sequence belongs to the Orn/Lys/Arg decarboxylase class-II family. In terms of assembly, homodimer. Only the dimer is catalytically active, as the active sites are constructed of residues from both monomers. Pyridoxal 5'-phosphate serves as cofactor.

The protein resides in the cytoplasm. It carries out the reaction L-ornithine + H(+) = putrescine + CO2. It participates in amine and polyamine biosynthesis; putrescine biosynthesis via L-ornithine pathway; putrescine from L-ornithine: step 1/1. With respect to regulation, inhibited by antizyme (AZ) OAZ1 in response to polyamine levels. AZ inhibits the assembly of the functional homodimer by binding to ODC monomers and targeting them for ubiquitin-independent proteolytic destruction by the 26S proteasome. In terms of biological role, catalyzes the first and rate-limiting step of polyamine biosynthesis that converts ornithine into putrescine, which is the precursor for the polyamines, spermidine and spermine. Polyamines are essential for cell proliferation and are implicated in cellular processes, ranging from DNA replication to apoptosis. This chain is Ornithine decarboxylase (spe-1), found in Neurospora crassa (strain ATCC 24698 / 74-OR23-1A / CBS 708.71 / DSM 1257 / FGSC 987).